A 209-amino-acid polypeptide reads, in one-letter code: MSLLLQHQFKPLPADKQIDTCSFLDSVSHLPAFFDCLGSAIFSPIKADITGNITKIRSVYESNPTKFKTLQMILEGEKELHGPQWPKVGATLALMWLKRGLKFIQVMLQSIADGERDDQNPNLIKVNITKAYEIALQKYHGWLVQKLFQTALFAAPYKDVFLKALSKGQTVKEEECIEKIRQFLVNYTTTIEAIYIMYNKMNAELDYKA.

2 tandem repeats follow at residues 45–55 (IKADITGNITK) and 56–66 (IRSVYESNPTK). Residues 45 to 66 (IKADITGNITKIRSVYESNPTK) are 2 X 12 AA approximate tandem repeats. Residue 48–55 (DITGNITK) participates in beta-D-galactosyl-(1-&gt;4)-beta-D-glucosyl-(1&lt;-&gt;1)-N-[(9Z)-octadecenoyl]-sphing-4-enine binding. 2 residues coordinate beta-D-galactosyl-(1-&gt;4)-beta-D-glucosyl-(1&lt;-&gt;1)-N-[(9Z)-octadecenoyl]-sphing-4-enine: H140 and Y207.

Belongs to the GLTP family.

The protein resides in the cytoplasm. Its function is as follows. Accelerates the intermembrane transfer of various glycolipids. Catalyzes the transfer of various glycosphingolipids between membranes but does not catalyze the transfer of phospholipids. May be involved in the intracellular translocation of glucosylceramides. The polypeptide is Glycolipid transfer protein A (gltp-a) (Xenopus laevis (African clawed frog)).